Consider the following 445-residue polypeptide: UPF0210 protein SMU_73 (445 aa).

The protein belongs to the UPF0210 family. As to quaternary structure, homodimer.

This chain is UPF0210 protein SMU_73, found in Streptococcus mutans serotype c (strain ATCC 700610 / UA159).